Reading from the N-terminus, the 227-residue chain is Ribonuclease 3 (227 aa).

The region spanning 4 to 133 (FEKLETLLGY…LIAAIYLDSN (130 aa)) is the RNase III domain. Residue E46 participates in Mg(2+) binding. D50 is a catalytic residue. Residues N119 and E122 each contribute to the Mg(2+) site. Residue E122 is part of the active site. The region spanning 158–226 (DPKTALQEWA…ARCLLHRLKN (69 aa)) is the DRBM domain.

Belongs to the ribonuclease III family. As to quaternary structure, homodimer. It depends on Mg(2+) as a cofactor.

The protein resides in the cytoplasm. The catalysed reaction is Endonucleolytic cleavage to 5'-phosphomonoester.. Functionally, digests double-stranded RNA. Involved in the processing of primary rRNA transcript to yield the immediate precursors to the large and small rRNAs (23S and 16S). Processes some mRNAs, and tRNAs when they are encoded in the rRNA operon. Processes pre-crRNA and tracrRNA of type II CRISPR loci if present in the organism. The sequence is that of Ribonuclease 3 from Rickettsia typhi (strain ATCC VR-144 / Wilmington).